We begin with the raw amino-acid sequence, 423 residues long: Maintenance of mitochondrial morphology protein 1 (423 aa).

The Lumenal segment spans residues 1–15 (MWLDDVASELSFTQG). The helical transmembrane segment at 16 to 36 (LLLGQLSIVILIGAFIKFFIF) threads the bilayer. The Cytoplasmic portion of the chain corresponds to 37–423 (GDPPSPDVSA…PGSMPGLSMA (387 aa)). An SMP-LTD domain is found at 110–322 (QPESLDWFNV…EPRFQQIELP (213 aa)). Disordered stretches follow at residues 327–370 (RKKN…EAET) and 394–423 (SEEG…LSMA). The span at 350-367 (RSRDVERDLREEARKEVE) shows a compositional bias: basic and acidic residues.

Belongs to the MMM1 family. In terms of assembly, homodimer. Component of the ER-mitochondria encounter structure (ERMES) or MDM complex, composed of mmm1, mdm10, mdm12 and mdm34. A mmm1 homodimer associates with one molecule of mdm12 on each side in a pairwise head-to-tail manner, and the SMP-LTD domains of mmm1 and mdm12 generate a continuous hydrophobic tunnel for phospholipid trafficking.

The protein localises to the endoplasmic reticulum membrane. In terms of biological role, component of the ERMES/MDM complex, which serves as a molecular tether to connect the endoplasmic reticulum (ER) and mitochondria. Components of this complex are involved in the control of mitochondrial shape and protein biogenesis, and function in nonvesicular lipid trafficking between the ER and mitochondria. The mdm12-mmm1 subcomplex functions in the major beta-barrel assembly pathway that is responsible for biogenesis of all outer membrane beta-barrel proteins, and acts in a late step after the SAM complex. The mdm10-mdm12-mmm1 subcomplex further acts in the TOM40-specific pathway after the action of the mdm12-mmm1 complex. Essential for establishing and maintaining the structure of mitochondria and maintenance of mtDNA nucleoids. This chain is Maintenance of mitochondrial morphology protein 1, found in Sclerotinia sclerotiorum (strain ATCC 18683 / 1980 / Ss-1) (White mold).